The chain runs to 490 residues: Betaine aldehyde dehydrogenase (490 aa).

Asp-93 serves as a coordination point for K(+). 150 to 152 (GAW) is an NAD(+) binding site. Lys-162 functions as the Charge relay system in the catalytic mechanism. 176–179 (KPSE) contacts NAD(+). Residue Val-180 participates in K(+) binding. NAD(+) is bound at residue 230–233 (GIAS). Leu-246 is a binding site for K(+). Catalysis depends on Glu-252, which acts as the Proton acceptor. Gly-254, Cys-286, and Glu-387 together coordinate NAD(+). The Nucleophile role is filled by Cys-286. At Cys-286 the chain carries Cysteine sulfenic acid (-SOH). K(+) contacts are provided by Lys-457 and Gly-460. The active-site Charge relay system is the Glu-464.

The protein belongs to the aldehyde dehydrogenase family. As to quaternary structure, dimer of dimers. The cofactor is K(+).

It catalyses the reaction betaine aldehyde + NAD(+) + H2O = glycine betaine + NADH + 2 H(+). It participates in amine and polyamine biosynthesis; betaine biosynthesis via choline pathway; betaine from betaine aldehyde: step 1/1. Functionally, involved in the biosynthesis of the osmoprotectant glycine betaine. Catalyzes the irreversible oxidation of betaine aldehyde to the corresponding acid. The polypeptide is Betaine aldehyde dehydrogenase (Yersinia pseudotuberculosis serotype O:3 (strain YPIII)).